Consider the following 393-residue polypeptide: Branched-chain-amino-acid aminotransferase, mitochondrial (393 aa).

The transit peptide at 1–27 (MSAAILGQVWTRKLLPIPWRLCVPGRC) directs the protein to the mitochondrion. Tyr-169 serves as a coordination point for substrate. At Lys-230 the chain carries N6-(pyridoxal phosphate)lysine. Residue Lys-322 is modified to N6-acetyllysine.

This sequence belongs to the class-IV pyridoxal-phosphate-dependent aminotransferase family. As to quaternary structure, homodimer. Requires pyridoxal 5'-phosphate as cofactor. As to expression, expressed in all tissues.

It localises to the mitochondrion. It catalyses the reaction L-leucine + 2-oxoglutarate = 4-methyl-2-oxopentanoate + L-glutamate. The enzyme catalyses L-isoleucine + 2-oxoglutarate = (S)-3-methyl-2-oxopentanoate + L-glutamate. It carries out the reaction L-valine + 2-oxoglutarate = 3-methyl-2-oxobutanoate + L-glutamate. Functionally, catalyzes the first reaction in the catabolism of the essential branched chain amino acids leucine, isoleucine, and valine. May also function as a transporter of branched chain alpha-keto acids. This chain is Branched-chain-amino-acid aminotransferase, mitochondrial (Bcat2), found in Rattus norvegicus (Rat).